Reading from the N-terminus, the 56-residue chain is Conotoxin reg3.9 (56 aa).

The first 8 residues, 1 to 8 (LLFPLSAL), serve as a signal peptide directing secretion. The segment at 1 to 22 (LLFPLSALPLDGDQPADQPAER) is disordered. Positions 9–40 (PLDGDQPADQPAERMQDISPEQNFWFDLVERG) are excised as a propeptide. Intrachain disulfides connect C41–C55, C42–C53, and C47–C56.

The protein belongs to the conotoxin M superfamily. As to expression, expressed by the venom duct.

Its subcellular location is the secreted. This chain is Conotoxin reg3.9, found in Conus regius (Crown cone).